A 398-amino-acid chain; its full sequence is Dual specificity protein phosphatase 4 (398 aa).

V2 bears the N-acetylvaline mark. The Rhodanese domain occupies 45-163; the sequence is SGGKCLLLDC…FSSEYPEFCS (119 aa). The Tyrosine-protein phosphatase domain maps to 199-340; it reads GPVEILPFLY…LLQFESQVLT (142 aa). C284 serves as the catalytic Phosphocysteine intermediate. S390 and S395 each carry phosphoserine; by MAPK.

Belongs to the protein-tyrosine phosphatase family. Non-receptor class dual specificity subfamily. In terms of assembly, hollow spherical complex composed of 24 subunits with pseudooctahedral symmetry, has a tetramer as the basic unit. In terms of processing, phosphorylation in the C-terminus by ERK1/2 inhibits proteasomal degradation and stabilizes the protein.

The protein localises to the nucleus. The enzyme catalyses O-phospho-L-tyrosyl-[protein] + H2O = L-tyrosyl-[protein] + phosphate. The catalysed reaction is O-phospho-L-seryl-[protein] + H2O = L-seryl-[protein] + phosphate. It carries out the reaction O-phospho-L-threonyl-[protein] + H2O = L-threonyl-[protein] + phosphate. Regulates mitogenic signal transduction by dephosphorylating both Thr and Tyr residues on MAP kinases ERK1 and ERK2. The polypeptide is Dual specificity protein phosphatase 4 (Dusp4) (Mus musculus (Mouse)).